A 244-amino-acid chain; its full sequence is tRNA pseudouridine synthase A (244 aa).

Catalysis depends on D53, which acts as the Nucleophile. Y111 contributes to the substrate binding site.

The protein belongs to the tRNA pseudouridine synthase TruA family. Homodimer.

It catalyses the reaction uridine(38/39/40) in tRNA = pseudouridine(38/39/40) in tRNA. Formation of pseudouridine at positions 38, 39 and 40 in the anticodon stem and loop of transfer RNAs. The sequence is that of tRNA pseudouridine synthase A from Bacillus sp. (strain KSM-64).